The sequence spans 327 residues: Biotin synthase (327 aa).

One can recognise a Radical SAM core domain in the interval 42–268; that stretch reads NKVQKASLLS…VMPASTVRLS (227 aa). [4Fe-4S] cluster is bound by residues C57, C61, and C64. Residues C102, C134, C194, and R266 each contribute to the [2Fe-2S] cluster site.

The protein belongs to the radical SAM superfamily. Biotin synthase family. Homodimer. Requires [4Fe-4S] cluster as cofactor. [2Fe-2S] cluster is required as a cofactor.

The catalysed reaction is (4R,5S)-dethiobiotin + (sulfur carrier)-SH + 2 reduced [2Fe-2S]-[ferredoxin] + 2 S-adenosyl-L-methionine = (sulfur carrier)-H + biotin + 2 5'-deoxyadenosine + 2 L-methionine + 2 oxidized [2Fe-2S]-[ferredoxin]. It participates in cofactor biosynthesis; biotin biosynthesis; biotin from 7,8-diaminononanoate: step 2/2. Functionally, catalyzes the conversion of dethiobiotin (DTB) to biotin by the insertion of a sulfur atom into dethiobiotin via a radical-based mechanism. This chain is Biotin synthase, found in Rhizobium rhizogenes (strain K84 / ATCC BAA-868) (Agrobacterium radiobacter).